A 264-amino-acid chain; its full sequence is Spermidine/putrescine transport system permease protein PotC (264 aa).

The Cytoplasmic portion of the chain corresponds to 1–7; that stretch reads MIGRLLR. The helical transmembrane segment at 8-27 threads the bilayer; it reads GGFMTAIYAYLYIPIIILIV. The Periplasmic portion of the chain corresponds to 28–65; it reads NSFNSSRFGINWQGFTTKWYSLLMNNDSLLQAAQHSLT. One can recognise an ABC transmembrane type-1 domain in the interval 60 to 248; that stretch reads AQHSLTMAVF…VLSLVMVIAS (189 aa). The chain crosses the membrane as a helical span at residues 66–85; sequence MAVFSATFATLIGSLTAVAL. Residues 86–100 are Cytoplasmic-facing; the sequence is YRYRFRGKPFVSGML. Residues 101-120 traverse the membrane as a helical segment; sequence FVVMMSPDIVMAISLLVLFM. Residues 121–128 lie on the Periplasmic side of the membrane; sequence LLGIQLGF. A helical membrane pass occupies residues 129–148; sequence WSLLFSHITFCLPFVVVTVY. Residues 149–176 lie on the Cytoplasmic side of the membrane; the sequence is SRLKGFDVRMLEAAKDLGASEFTILRKI. The helical transmembrane segment at 177-196 threads the bilayer; the sequence is ILPLAMPAVAAGWVLSFTLS. Residues 197-231 are Periplasmic-facing; it reads MDDVVVSSFVTGPSYEILPLKIYSMVKVGVSPEVN. A helical transmembrane segment spans residues 232 to 251; sequence ALATILLVLSLVMVIASQLI. The Cytoplasmic segment spans residues 252-264; that stretch reads ARDKTKGNTGDVK.

The protein belongs to the binding-protein-dependent transport system permease family. CysTW subfamily.

It localises to the cell inner membrane. In terms of biological role, required for the activity of the bacterial periplasmic transport system of putrescine and spermidine. In Escherichia coli O157:H7, this protein is Spermidine/putrescine transport system permease protein PotC (potC).